A 382-amino-acid chain; its full sequence is Anhydro-N-acetylmuramic acid kinase (382 aa).

18-25 (GTSLDGVD) contributes to the ATP binding site.

This sequence belongs to the anhydro-N-acetylmuramic acid kinase family.

The enzyme catalyses 1,6-anhydro-N-acetyl-beta-muramate + ATP + H2O = N-acetyl-D-muramate 6-phosphate + ADP + H(+). Its pathway is amino-sugar metabolism; 1,6-anhydro-N-acetylmuramate degradation. The protein operates within cell wall biogenesis; peptidoglycan recycling. In terms of biological role, catalyzes the specific phosphorylation of 1,6-anhydro-N-acetylmuramic acid (anhMurNAc) with the simultaneous cleavage of the 1,6-anhydro ring, generating MurNAc-6-P. Is required for the utilization of anhMurNAc either imported from the medium or derived from its own cell wall murein, and thus plays a role in cell wall recycling. The chain is Anhydro-N-acetylmuramic acid kinase from Ralstonia nicotianae (strain ATCC BAA-1114 / GMI1000) (Ralstonia solanacearum).